A 172-amino-acid polypeptide reads, in one-letter code: Large ribosomal subunit protein uL11m (172 aa).

This sequence belongs to the universal ribosomal protein uL11 family.

It localises to the mitochondrion. The polypeptide is Large ribosomal subunit protein uL11m (mrpl11) (Dictyostelium discoideum (Social amoeba)).